The following is a 208-amino-acid chain: ATP synthase subunit b 1 (208 aa).

Residues 1–18 (MFVSTAFAQTATESQPAS) show a composition bias toward polar residues. The disordered stretch occupies residues 1–26 (MFVSTAFAQTATESQPASTAGEHGAA). Residues 56-78 (SQVLWLAITFGLFYLFLSRVVLP) form a helical membrane-spanning segment.

This sequence belongs to the ATPase B chain family. As to quaternary structure, F-type ATPases have 2 components, F(1) - the catalytic core - and F(0) - the membrane proton channel. F(1) has five subunits: alpha(3), beta(3), gamma(1), delta(1), epsilon(1). F(0) has three main subunits: a(1), b(2) and c(10-14). The alpha and beta chains form an alternating ring which encloses part of the gamma chain. F(1) is attached to F(0) by a central stalk formed by the gamma and epsilon chains, while a peripheral stalk is formed by the delta and b chains.

The protein resides in the cell inner membrane. F(1)F(0) ATP synthase produces ATP from ADP in the presence of a proton or sodium gradient. F-type ATPases consist of two structural domains, F(1) containing the extramembraneous catalytic core and F(0) containing the membrane proton channel, linked together by a central stalk and a peripheral stalk. During catalysis, ATP synthesis in the catalytic domain of F(1) is coupled via a rotary mechanism of the central stalk subunits to proton translocation. In terms of biological role, component of the F(0) channel, it forms part of the peripheral stalk, linking F(1) to F(0). This chain is ATP synthase subunit b 1, found in Brucella abortus (strain 2308).